The primary structure comprises 130 residues: Large ribosomal subunit protein bL12 (130 aa).

It belongs to the bacterial ribosomal protein bL12 family. As to quaternary structure, homodimer. Part of the ribosomal stalk of the 50S ribosomal subunit. Forms a multimeric L10(L12)X complex, where L10 forms an elongated spine to which 2 to 4 L12 dimers bind in a sequential fashion. Binds GTP-bound translation factors.

Functionally, forms part of the ribosomal stalk which helps the ribosome interact with GTP-bound translation factors. Is thus essential for accurate translation. The polypeptide is Large ribosomal subunit protein bL12 (Synechococcus sp. (strain WH7803)).